A 574-amino-acid polypeptide reads, in one-letter code: DNA mismatch repair protein MutL (574 aa).

It belongs to the DNA mismatch repair MutL/HexB family.

Functionally, this protein is involved in the repair of mismatches in DNA. It is required for dam-dependent methyl-directed DNA mismatch repair. May act as a 'molecular matchmaker', a protein that promotes the formation of a stable complex between two or more DNA-binding proteins in an ATP-dependent manner without itself being part of a final effector complex. This chain is DNA mismatch repair protein MutL, found in Coxiella burnetii (strain Dugway 5J108-111).